Reading from the N-terminus, the 468-residue chain is Mitochondrial distribution and morphology protein 10 (468 aa).

The protein belongs to the MDM10 family. In terms of assembly, component of the ER-mitochondria encounter structure (ERMES) or MDM complex, composed of MMM1, MDM10, MDM12 and MDM34. Associates with the mitochondrial outer membrane sorting assembly machinery SAM(core) complex.

It is found in the mitochondrion outer membrane. Its function is as follows. Component of the ERMES/MDM complex, which serves as a molecular tether to connect the endoplasmic reticulum and mitochondria. Components of this complex are involved in the control of mitochondrial shape and protein biogenesis and may function in phospholipid exchange. MDM10 is involved in the late assembly steps of the general translocase of the mitochondrial outer membrane (TOM complex). Functions in the TOM40-specific route of the assembly of outer membrane beta-barrel proteins, including the association of TOM40 with the receptor TOM22 and small TOM proteins. Can associate with the SAM(core) complex as well as the MDM12-MMM1 complex, both involved in late steps of the major beta-barrel assembly pathway, that is responsible for biogenesis of all outer membrane beta-barrel proteins. May act as a switch that shuttles between both complexes and channels precursor proteins into the TOM40-specific pathway. Plays a role in mitochondrial morphology and in the inheritance of mitochondria. The sequence is that of Mitochondrial distribution and morphology protein 10 from Blastomyces gilchristii (strain SLH14081) (Blastomyces dermatitidis).